The primary structure comprises 504 residues: Kinesin light chain 3 (504 aa).

The stretch at 90–150 (ALSAHVGALE…EEEKRHLEFL (61 aa)) forms a coiled coil. Residues 153–197 (LRQYDPPAESQQSESPPRRDSLASLFPSEEEERKGPEAAGAAAAQ) are disordered. A compositionally biased stretch (low complexity) spans 158–167 (PPAESQQSES). Residue Ser173 is modified to Phosphoserine. 5 TPR repeats span residues 207–240 (LRTLHNLVIQYAGQGRYEVAVPLCRQALEDLERS), 249–282 (ATMLNILALVYRDQNKYKEATDLLHDALQIREQT), 291–324 (AATLNNLAVLYGKRGRYREAEPLCQRALEIREKV), 333–366 (AKQLNNLALLCQNQGKFEDVERHYARALSIYEAL), and 375–408 (AKTKNNLASAYLKQNKYQQAEELYKEILHKEDLP). The tract at residues 411 to 438 (LGAPNTGTAGDAEQALRRSSSLSKIRES) is disordered. Ser466 bears the Phosphoserine mark. Residues 472–504 (VDAPRAPGTQFPSWHLDKAPRTLSASTQDLSPH) form a disordered region. Residues 494–504 (LSASTQDLSPH) are compositionally biased toward polar residues. At Thr498 the chain carries Phosphothreonine. A Phosphoserine modification is found at Ser502.

Belongs to the kinesin light chain family. In terms of assembly, oligomer composed of two heavy chains and two light chains. Associates with microtubulin in an ATP-dependent manner. Interacts with KIF5C. Interacts with ODF1. Interacts with LRGUK. Interacts with VDAC2.

The protein resides in the cytoplasm. It is found in the cytoskeleton. It localises to the mitochondrion. Functionally, kinesin is a microtubule-associated force-producing protein that may play a role in organelle transport. Plays a role during spermiogenesis in the development of the sperm tail midpiece and in the normal function of spermatozoa. May play a role in the formation of the mitochondrial sheath formation in the developing spermatid midpiece. The sequence is that of Kinesin light chain 3 (KLC3) from Homo sapiens (Human).